Consider the following 81-residue polypeptide: Sulfur carrier protein TusA (81 aa).

The active-site Cysteine persulfide intermediate is Cys-19.

It belongs to the sulfur carrier protein TusA family.

The protein localises to the cytoplasm. In terms of biological role, sulfur carrier protein which probably makes part of a sulfur-relay system. In Shewanella putrefaciens (strain CN-32 / ATCC BAA-453), this protein is Sulfur carrier protein TusA.